The following is a 111-amino-acid chain: 4'-hydroxy-3'-methoxypropiophenone carrier protein ppsC (111 aa).

Residues 1–21 form a disordered region; it reads MSAQVMRPGTPQHEGQEFLSG.

It participates in secondary metabolite biosynthesis. In terms of biological role, 4'-hydroxy-3'-methoxypropiophenone carrier protein; part of the gene cluster that mediates the biosynthesis of 2,4'-dihydroxy-3'-methoxypropiophenone. The first step of the pathway is the conversion of acetate into acetyl-CoA by the acyl-CoA ligase ppsA. Acetyl-CoA is then used as a starter unit by the polyketide synthase ppsB and condensed with 4 malonyl-CoA unit to produce the pentaketide backbone. During polyketide extension, the polykedite chain is probably reduced and dehydrated by the KR and PT domains, respectively. O-methylation seems to be catalyzed by an unknown methyltransferase rather than by the CMeT domain of ppsB. Two hydroxylations and one further decarboxylation step catalyzed by yet unknown enzymes are then required to yield 4'-hydroxy-3'-methoxypropiophenone. PpsC functions as a carrier protein to transport 4'-hydroxy-3'-methoxypropiophenone to a specific cell compartment in which 4'-hydroxy-3'-methoxypropiophenone is hydroxylated to 2,4'-dihydroxy-3'-methoxypropiophenone by a still to be identified enzyme. The polypeptide is 4'-hydroxy-3'-methoxypropiophenone carrier protein ppsC (Aspergillus oryzae (strain ATCC 42149 / RIB 40) (Yellow koji mold)).